The following is a 264-amino-acid chain: Ribosomal protein L11 methyltransferase (264 aa).

S-adenosyl-L-methionine contacts are provided by threonine 116, glycine 137, aspartate 159, and asparagine 200.

Belongs to the methyltransferase superfamily. PrmA family.

The protein localises to the cytoplasm. It carries out the reaction L-lysyl-[protein] + 3 S-adenosyl-L-methionine = N(6),N(6),N(6)-trimethyl-L-lysyl-[protein] + 3 S-adenosyl-L-homocysteine + 3 H(+). Methylates ribosomal protein L11. The chain is Ribosomal protein L11 methyltransferase from Thermotoga maritima (strain ATCC 43589 / DSM 3109 / JCM 10099 / NBRC 100826 / MSB8).